Reading from the N-terminus, the 89-residue chain is Defensin-like protein 250 (89 aa).

Residues 1–23 form the signal peptide; it reads MKLAAIFLVSCVLLSLLPSLTIA. 4 disulfides stabilise this stretch: Cys-29-Cys-86, Cys-40-Cys-69, Cys-48-Cys-79, and Cys-67-Cys-81.

It belongs to the DEFL family.

Its subcellular location is the secreted. The sequence is that of Defensin-like protein 250 (SCRL8) from Arabidopsis thaliana (Mouse-ear cress).